We begin with the raw amino-acid sequence, 278 residues long: Large ribosomal subunit protein uL2 (278 aa).

A disordered region spans residues 218–278 (RPHNRGVVMN…IMRSRHQRKK (61 aa)).

It belongs to the universal ribosomal protein uL2 family. As to quaternary structure, part of the 50S ribosomal subunit. Forms a bridge to the 30S subunit in the 70S ribosome.

Its function is as follows. One of the primary rRNA binding proteins. Required for association of the 30S and 50S subunits to form the 70S ribosome, for tRNA binding and peptide bond formation. It has been suggested to have peptidyltransferase activity; this is somewhat controversial. Makes several contacts with the 16S rRNA in the 70S ribosome. This chain is Large ribosomal subunit protein uL2, found in Rhizobium etli (strain CIAT 652).